Reading from the N-terminus, the 426-residue chain is Phosphomethylpyrimidine synthase (426 aa).

Substrate is bound by residues N65, M94, Y123, H162, 184–186 (SRG), 225–228 (DGMR), and E264. H268 serves as a coordination point for Zn(2+). Y291 contacts substrate. H332 serves as a coordination point for Zn(2+). [4Fe-4S] cluster is bound by residues C408, C411, and C415.

The protein belongs to the ThiC family. The cofactor is [4Fe-4S] cluster.

It carries out the reaction 5-amino-1-(5-phospho-beta-D-ribosyl)imidazole + S-adenosyl-L-methionine = 4-amino-2-methyl-5-(phosphooxymethyl)pyrimidine + CO + 5'-deoxyadenosine + formate + L-methionine + 3 H(+). Its pathway is cofactor biosynthesis; thiamine diphosphate biosynthesis. Its function is as follows. Catalyzes the synthesis of the hydroxymethylpyrimidine phosphate (HMP-P) moiety of thiamine from aminoimidazole ribotide (AIR) in a radical S-adenosyl-L-methionine (SAM)-dependent reaction. The sequence is that of Phosphomethylpyrimidine synthase from Methanococcus aeolicus (strain ATCC BAA-1280 / DSM 17508 / OCM 812 / Nankai-3).